The chain runs to 338 residues: Phosphoribosylformylglycinamidine cyclo-ligase (338 aa).

The protein belongs to the AIR synthase family.

It localises to the cytoplasm. It catalyses the reaction 2-formamido-N(1)-(5-O-phospho-beta-D-ribosyl)acetamidine + ATP = 5-amino-1-(5-phospho-beta-D-ribosyl)imidazole + ADP + phosphate + H(+). It participates in purine metabolism; IMP biosynthesis via de novo pathway; 5-amino-1-(5-phospho-D-ribosyl)imidazole from N(2)-formyl-N(1)-(5-phospho-D-ribosyl)glycinamide: step 2/2. The protein is Phosphoribosylformylglycinamidine cyclo-ligase of Thermoplasma acidophilum (strain ATCC 25905 / DSM 1728 / JCM 9062 / NBRC 15155 / AMRC-C165).